The chain runs to 644 residues: 3D-(3,5/4)-trihydroxycyclohexane-1,2-dione hydrolase (644 aa).

Glu65 lines the thiamine diphosphate pocket. A thiamine pyrophosphate binding region spans residues 442 to 522; that stretch reads SLPGDLHKVW…INILLFDNAG (81 aa). 2 residues coordinate Mg(2+): Asp493 and Asn520.

This sequence belongs to the TPP enzyme family. Mg(2+) is required as a cofactor. It depends on thiamine diphosphate as a cofactor.

The enzyme catalyses 3D-3,5/4-trihydroxycyclohexane-1,2-dione + H2O = 5-deoxy-D-glucuronate + H(+). Its pathway is polyol metabolism; myo-inositol degradation into acetyl-CoA; acetyl-CoA from myo-inositol: step 3/7. Involved in the cleavage of the C1-C2 bond of 3D-(3,5/4)-trihydroxycyclohexane-1,2-dione (THcHDO) to yield 5-deoxy-glucuronate (5DG). The sequence is that of 3D-(3,5/4)-trihydroxycyclohexane-1,2-dione hydrolase from Clostridium tetani (strain Massachusetts / E88).